The primary structure comprises 414 residues: Eukaryotic initiation factor 4A-1 (414 aa).

Positions 41 to 69 (ESFDDMGLQENLLRGIYAYGFEKPSAIQQ) match the Q motif motif. A Helicase ATP-binding domain is found at 72–242 (IVPFCKGLDV…RKFMNKPVRI (171 aa)). 85-92 (AQSGTGKT) contributes to the ATP binding site. The DEAD box signature appears at 190-193 (DEAD). Positions 253 to 414 (GIKQFYVNVE…ELPANVADLL (162 aa)) constitute a Helicase C-terminal domain.

It belongs to the DEAD box helicase family. eIF4A subfamily. EIF4F is a multi-subunit complex, the composition of which varies with external and internal environmental conditions. It is composed of at least EIF4A, EIF4E and EIF4G.

The enzyme catalyses ATP + H2O = ADP + phosphate + H(+). In terms of biological role, ATP-dependent RNA helicase which is a subunit of the eIF4F complex involved in cap recognition and is required for mRNA binding to ribosome. In the current model of translation initiation, eIF4A unwinds RNA secondary structures in the 5'-UTR of mRNAs which is necessary to allow efficient binding of the small ribosomal subunit, and subsequent scanning for the initiator codon. This is Eukaryotic initiation factor 4A-1 from Oryza sativa subsp. japonica (Rice).